The chain runs to 94 residues: C-X-C motif chemokine 11 (94 aa).

A signal peptide spans 1 to 21 (MSVKGMAIALAVILCATVVQG). Arg27 carries the citrulline; by PAD2 modification. 2 cysteine pairs are disulfide-bonded: Cys30–Cys57 and Cys32–Cys74.

In terms of assembly, interacts with TNFAIP6 (via Link domain). High levels in peripheral blood leukocytes, pancreas and liver astrocytes. Moderate levels in thymus, spleen and lung. Low levels in placenta, prostate and small intestine. Also found in epidermal basal layer keratinocytes in skin disorders.

The protein localises to the secreted. Chemotactic for interleukin-activated T-cells but not unstimulated T-cells, neutrophils or monocytes. Induces calcium release in activated T-cells. Binds to CXCR3. May play an important role in CNS diseases which involve T-cell recruitment. May play a role in skin immune responses. In Homo sapiens (Human), this protein is C-X-C motif chemokine 11 (CXCL11).